A 3122-amino-acid polypeptide reads, in one-letter code: tRNA nuclease CdiA-2 (3122 aa).

Positions 36-205 (RAGVVPAWLS…ATLTTGNPNF (170 aa)) are two-partner system transport domain (TPS). A helical transmembrane segment spans residues 54-74 (VALAVLVAAGVVPIWVNAQVV). Residues 256 to 1254 (VVAGSNQVDY…GGSVAIQASG (999 aa)) are FHA-1. The segment at 492 to 512 (GMTLGGGSLSNQGGRANSQGP) is disordered. Polar residues predominate over residues 500–512 (LSNQGGRANSQGP). Residues 1345 to 1635 (TRRVMQTSGN…SATAVNVLSN (291 aa)) are receptor binding domain (RBD). The tract at residues 1790–1845 (TAGNIDLKNTQVFTNSGTVKADTTLALQGKQIDNAFGALQSGGLTSLDTTGNVDLT) is periplasmic FHA-1 repeat (pFR). The interval 1947–2085 (SDTDLNSATG…TERHVYNSRE (139 aa)) is FHA-2. Disordered regions lie at residues 2002–2031 (TSTI…ALTG), 2151–2174 (TTSQ…MSGG), and 2325–2352 (IGVQ…GSSI). A pretoxin (PT) domain region spans residues 2086–2825 (THSRSGVVSG…SAGAAMASNV (740 aa)). Low complexity-rich tracts occupy residues 2151–2170 (TTSQ…HSGL) and 2325–2341 (IGVQ…MQSS). Polar residues predominate over residues 2342 to 2352 (EDQTIQRGSSI). Residues 2821 to 3122 (MASNVELYNA…NITIIKPKGN (302 aa)) are C-terminal effector domain (CT), has tRNA nuclease activity. Residues 2826-2829 (ELYN) carry the ELYN C-terminal motif motif. The tract at residues 2948–3000 (GATDRTPPSNAILSNSNSDNNSTQGSQSGTVTKTPNPEATGSLSGKPTQIPPL) is disordered. The segment at 2948-3122 (GATDRTPPSN…NITIIKPKGN (175 aa)) is truncated CT domain, has tRNA nuclease activity, sufficient for interaction with CdiI-2. Polar residues predominate over residues 2953–2994 (TPPSNAILSNSNSDNNSTQGSQSGTVTKTPNPEATGSLSGKP). Residues 2987 to 3122 (TGSLSGKPTQ…NITIIKPKGN (136 aa)) are has tRNase activity. Catalysis depends on residues E3012, D3039, D3048, and K3067.

In the N-terminal section; belongs to the CdiA toxin family. As to quaternary structure, interacts with cognate immunity protein CdiI, which blocks its tRNA nuclease activity. The truncated CT fragment (residues 2948-3122) specifically interacts with cognate CdiI which inhibits the tRNA nuclease activity. The truncated CT is more stable in vitro than the original CT fragment characterized in E.coli.

The protein resides in the membrane. It localises to the secreted. Its subcellular location is the target cell. The protein localises to the target cell cytoplasm. Toxic component of a toxin-immunity protein module, which functions as a cellular contact-dependent growth inhibition (CDI) system. CDI modules allow bacteria to communicate with and inhibit the growth of closely related neighboring bacteria in a contact-dependent fashion. The C-terminal 301 residues (the CT fragment) cleaves near the C-terminus of E.coli tRNA1B(Ala), probably preventing tRNA charging, and inhibits growth in E.coli. A truncated CT fragment (residues 2948-3122) has tRNA endonuclease activity on several B.thailandensis tRNAs as well as tRNA2(Arg) where it cleaves after A-70 and U-71. Inactive CT domain binds tRNA, probably in a 1:1 complex. Toxic activity is neutralized by coexpression of the cognate immunity protein CdiI in E.coli, but not by non-cognate immunity proteins from other strains of B.pseudomallei. May use lipopolysaccharide as its target cell receptor. Probably gains access to the cytoplasm of target cells (B.thailandensis strain E264) by using integral inner membrane protein BTH_II0599. Protein BTH_I0359 is also implicated in an unknown fashion in CDI in B.thailandensis strain E264. Its function is as follows. Expression of this cdiAIB locus in B.thailandensis confers protection against other bacteria carrying the locus; growth inhibition requires cellular contact. In terms of biological role, the CdiA protein is thought to be exported from the cell through the central lumen of CdiB, the other half of its two-partner system (TPS). The TPS domain probably remains associated with CdiB while the FHA-1 domain forms an extended filament with the receptor-binding domain (RBD) at its extremity; in the secretion arrested state the C-terminus of the RBD domain form a hairpin-like structure as the FHA-2, PT and CT domains are periplasmic. Upon binding to a target cell outer membrane receptor (possibly a lipoprotein in this CDI) a signal is transmitted to activate secretion. The filament elongates slightly, the rest of CdiA is secreted and the FHA-2 domain becomes stably associated with the target cell's outer membrane where it facilitates entry of the toxic CT domain into the target cell periplasm. From there the toxic CT domain is cleaved and gains access to the target cell cytoplasm via an inner membrane protein (probably inner membrane protein BTH_II0599). The protein is tRNA nuclease CdiA-2 (cdiA2) of Burkholderia pseudomallei (strain 1026b).